The chain runs to 327 residues: Phenylalanine--tRNA ligase alpha subunit (327 aa).

Position 252 (Glu-252) interacts with Mg(2+).

The protein belongs to the class-II aminoacyl-tRNA synthetase family. Phe-tRNA synthetase alpha subunit type 1 subfamily. In terms of assembly, tetramer of two alpha and two beta subunits. Requires Mg(2+) as cofactor.

Its subcellular location is the cytoplasm. The enzyme catalyses tRNA(Phe) + L-phenylalanine + ATP = L-phenylalanyl-tRNA(Phe) + AMP + diphosphate + H(+). This is Phenylalanine--tRNA ligase alpha subunit from Shigella sonnei (strain Ss046).